The following is a 123-amino-acid chain: Large ribosomal subunit protein uL14 (123 aa).

The protein belongs to the universal ribosomal protein uL14 family. Part of the 50S ribosomal subunit. Forms a cluster with proteins L3 and L19. In the 70S ribosome, L14 and L19 interact and together make contacts with the 16S rRNA in bridges B5 and B8.

Binds to 23S rRNA. Forms part of two intersubunit bridges in the 70S ribosome. The chain is Large ribosomal subunit protein uL14 from Erwinia tasmaniensis (strain DSM 17950 / CFBP 7177 / CIP 109463 / NCPPB 4357 / Et1/99).